A 471-amino-acid polypeptide reads, in one-letter code: Glutamate--tRNA ligase (471 aa).

The short motif at 9-19 (PSPTGYLHVGG) is the 'HIGH' region element. Zn(2+)-binding residues include C98, C100, C125, and H127. Positions 237–241 (KLSKR) match the 'KMSKS' region motif. Position 240 (K240) interacts with ATP.

The protein belongs to the class-I aminoacyl-tRNA synthetase family. Glutamate--tRNA ligase type 1 subfamily. As to quaternary structure, monomer. Zn(2+) is required as a cofactor.

The protein resides in the cytoplasm. It catalyses the reaction tRNA(Glu) + L-glutamate + ATP = L-glutamyl-tRNA(Glu) + AMP + diphosphate. Its function is as follows. Catalyzes the attachment of glutamate to tRNA(Glu) in a two-step reaction: glutamate is first activated by ATP to form Glu-AMP and then transferred to the acceptor end of tRNA(Glu). The chain is Glutamate--tRNA ligase from Shigella sonnei (strain Ss046).